The following is a 314-amino-acid chain: Methionyl-tRNA formyltransferase (314 aa).

111–114 (SLLP) is a (6S)-5,6,7,8-tetrahydrofolate binding site.

It belongs to the Fmt family.

The catalysed reaction is L-methionyl-tRNA(fMet) + (6R)-10-formyltetrahydrofolate = N-formyl-L-methionyl-tRNA(fMet) + (6S)-5,6,7,8-tetrahydrofolate + H(+). Attaches a formyl group to the free amino group of methionyl-tRNA(fMet). The formyl group appears to play a dual role in the initiator identity of N-formylmethionyl-tRNA by promoting its recognition by IF2 and preventing the misappropriation of this tRNA by the elongation apparatus. This is Methionyl-tRNA formyltransferase from Nitrobacter winogradskyi (strain ATCC 25391 / DSM 10237 / CIP 104748 / NCIMB 11846 / Nb-255).